Consider the following 400-residue polypeptide: MSKAMISRENYLQQLIQFKDTDFIKVISGVRRSGKSVLLMQYRDYLQQQGIASENILYLNFESFEYQWVKDAQDFQQLIQEKMPSSQEKIYFLIDEIQFVEGWQKIVNALRVSFNTDIVITGSNANLLSGELATLLSGRYVEIKIYPLSFKEFLHAKNVDSQSRLVDKLYSEYEKYGGFPSVVMADEPLKETILSGIFDSIVLNDIAHRAGVKDTHILKSVILFLADNVGQLVNPSKISNTLTSERVPTSNHTISKYLDLLENAFLFYKAKQYDIRGKGYLKTNAKYFIVDNGLRRHAIGKKGANYANRLENIVFIELLRRGYSVDVGKLDSKEIDFIARKADEILYVQVAFEIPENTHETDNLLHIKDNYKKILITGKYYEQTEIDGIEVIYVVDWLLQ.

The protein to M.jannaschii MJ1544 and MJ1637.

This is an uncharacterized protein from Haemophilus influenzae (strain ATCC 51907 / DSM 11121 / KW20 / Rd).